The sequence spans 2242 residues: Transcription factor sma-9 (2242 aa).

Residues 120–383 (HQLAQQQAQQ…QQAQQAQLAQ (264 aa)) are a coiled coil. A compositionally biased stretch (low complexity) spans 317 to 330 (AAQQAQAQNNASQQ). Disordered stretches follow at residues 317–344 (AAQQ…SSTP), 494–553 (TPVA…SMSD), 583–617 (GAQS…SRSQ), 712–754 (LAAH…SSFP), and 1323–1349 (EDST…SPPL). The span at 331-344 (RPSVASTPALSSTP) shows a compositional bias: polar residues. Low complexity-rich tracts occupy residues 494 to 523 (TPVA…ATSS) and 539 to 550 (SSSKAASSGNES). Residues 583 to 601 (GAQSSVDHDSNSGGSTRTS) show a composition bias toward polar residues. Positions 1324–1338 (DSTSAEPSTSGQSLL) are enriched in polar residues. C2H2-type zinc fingers lie at residues 1447-1469 (YICD…IKSH), 1475-1499 (FNCT…SKTH), 1700-1722 (LKCD…QHTH), 1734-1760 (YQCS…HGVH), and 1790-1814 (FMCV…SKTH). The span at 2029-2039 (SITSPIVSSST) shows a compositional bias: low complexity. Disordered regions lie at residues 2029–2059 (SITS…PTHT) and 2085–2107 (STDK…PRPI). The span at 2085–2099 (STDKAHASESLSDRL) shows a compositional bias: basic and acidic residues. 2 C2H2-type zinc fingers span residues 2111-2134 (TKCQ…HVDH) and 2143-2167 (YKCP…VTAH). The disordered stretch occupies residues 2219–2242 (HELYAQTQQGAGSSTSNQSPKAAN). Residues 2223–2242 (AQTQQGAGSSTSNQSPKAAN) show a composition bias toward polar residues.

In terms of tissue distribution, expressed in the ventral nerve cord (VNC), pharynx, intestine and seam cells (at protein level).

The protein localises to the nucleus. In terms of biological role, transcription factor, probably acting as a transcriptional activator and repressor, involved in the TGF-beta-like dbl-1 signaling pathway. Plays a role in regulation of body size, and patterning of male-specific genital sensilla (simple sense organs), known as rays, and mating-associated structures, spicules. Required for the dorsoventral patterning of the postembryonic mesodermal lineage (M lineage), acting by antagonizing the TGF-beta-like dbl-1 signaling pathway, in part by repressing expression of transcription factor unc-130. Involved in egg-laying, perhaps via modulation of cholinergic neurotransmission. Involved in production of reactive oxygen species (ROS), acting downstream of the dbl-1 signaling pathway. Plays a role in the mitochondrial unfolded protein response (mtUPR). May play a role in modulating lifespan and in responses to proteotoxic stress. Its function is as follows. Transcription factor, probably acting as a transcriptional activator. Required for patterning of male-specific genital sensilla (simple sense organs), known as rays. Dispensable for regulation of body size. The sequence is that of Transcription factor sma-9 from Caenorhabditis elegans.